The following is a 361-amino-acid chain: 4-oxalomesaconate tautomerase (361 aa).

This sequence belongs to the PrpF family.

It carries out the reaction (1E)-4-oxobut-1-ene-1,2,4-tricarboxylate = 4-carboxy-2-hydroxy-cis,cis-muconate. Catalyzes the tautomerization of the 4-oxalomesaconic acid keto (OMAketo) generated by GalA dioxygenase to 4-oxalomesaconic acid enol (OMAenol). Mediates the second step in gallate degradation pathway. This Pseudomonas putida (strain ATCC 47054 / DSM 6125 / CFBP 8728 / NCIMB 11950 / KT2440) protein is 4-oxalomesaconate tautomerase (galD).